A 358-amino-acid chain; its full sequence is Cytochrome c peroxidase, mitochondrial (358 aa).

The transit peptide at 1-38 directs the protein to the mitochondrion; that stretch reads MAASRTATRTLRALRTSTRPALTAAPRAAFRQGGRRLY. The Proton acceptor role is filled by H119. The segment at 192-214 is disordered; sequence PYRPGRQDRDAAGCTPDGRLPDA. H242 lines the heme b pocket. Residue W258 is the Tryptophan radical intermediate of the active site.

This sequence belongs to the peroxidase family. Cytochrome c peroxidase subfamily. As to quaternary structure, forms a one-to-one complex with cytochrome c. Heme b is required as a cofactor.

It localises to the mitochondrion matrix. The protein resides in the mitochondrion intermembrane space. It carries out the reaction 2 Fe(II)-[cytochrome c] + H2O2 + 2 H(+) = 2 Fe(III)-[cytochrome c] + 2 H2O. Destroys radicals which are normally produced within the cells and which are toxic to biological systems. This Neurospora crassa (strain ATCC 24698 / 74-OR23-1A / CBS 708.71 / DSM 1257 / FGSC 987) protein is Cytochrome c peroxidase, mitochondrial (ccp-1).